A 219-amino-acid chain; its full sequence is ATP phosphoribosyltransferase (219 aa).

Belongs to the ATP phosphoribosyltransferase family. Short subfamily. In terms of assembly, heteromultimer composed of HisG and HisZ subunits.

The protein localises to the cytoplasm. It carries out the reaction 1-(5-phospho-beta-D-ribosyl)-ATP + diphosphate = 5-phospho-alpha-D-ribose 1-diphosphate + ATP. It participates in amino-acid biosynthesis; L-histidine biosynthesis; L-histidine from 5-phospho-alpha-D-ribose 1-diphosphate: step 1/9. Functionally, catalyzes the condensation of ATP and 5-phosphoribose 1-diphosphate to form N'-(5'-phosphoribosyl)-ATP (PR-ATP). Has a crucial role in the pathway because the rate of histidine biosynthesis seems to be controlled primarily by regulation of HisG enzymatic activity. This chain is ATP phosphoribosyltransferase, found in Paramagnetospirillum magneticum (strain ATCC 700264 / AMB-1) (Magnetospirillum magneticum).